We begin with the raw amino-acid sequence, 312 residues long: Methionyl-tRNA formyltransferase (312 aa).

109-112 serves as a coordination point for (6S)-5,6,7,8-tetrahydrofolate; sequence SLLP.

It belongs to the Fmt family.

It carries out the reaction L-methionyl-tRNA(fMet) + (6R)-10-formyltetrahydrofolate = N-formyl-L-methionyl-tRNA(fMet) + (6S)-5,6,7,8-tetrahydrofolate + H(+). Attaches a formyl group to the free amino group of methionyl-tRNA(fMet). The formyl group appears to play a dual role in the initiator identity of N-formylmethionyl-tRNA by promoting its recognition by IF2 and preventing the misappropriation of this tRNA by the elongation apparatus. The polypeptide is Methionyl-tRNA formyltransferase (Listeria monocytogenes serotype 4b (strain CLIP80459)).